Here is a 1075-residue protein sequence, read N- to C-terminus: DNA-directed RNA polymerase subunit beta (1075 aa).

This sequence belongs to the RNA polymerase beta chain family. In terms of assembly, in plastids the minimal PEP RNA polymerase catalytic core is composed of four subunits: alpha, beta, beta', and beta''. When a (nuclear-encoded) sigma factor is associated with the core the holoenzyme is formed, which can initiate transcription.

The protein resides in the plastid. It localises to the chloroplast. The catalysed reaction is RNA(n) + a ribonucleoside 5'-triphosphate = RNA(n+1) + diphosphate. Functionally, DNA-dependent RNA polymerase catalyzes the transcription of DNA into RNA using the four ribonucleoside triphosphates as substrates. In Saccharum officinarum (Sugarcane), this protein is DNA-directed RNA polymerase subunit beta.